The sequence spans 220 residues: Uracil-DNA glycosylase (220 aa).

Residue Asp-61 is the Proton acceptor of the active site.

Belongs to the uracil-DNA glycosylase (UDG) superfamily. UNG family.

It is found in the cytoplasm. It catalyses the reaction Hydrolyzes single-stranded DNA or mismatched double-stranded DNA and polynucleotides, releasing free uracil.. Its function is as follows. Excises uracil residues from the DNA which can arise as a result of misincorporation of dUMP residues by DNA polymerase or due to deamination of cytosine. This chain is Uracil-DNA glycosylase, found in Pseudoalteromonas translucida (strain TAC 125).